Consider the following 270-residue polypeptide: Palmitoyltransferase ZDHHC12-A (270 aa).

Over 1–8 the chain is Cytoplasmic; the sequence is MNKSLFKS. A helical membrane pass occupies residues 9 to 29; that stretch reads GCLVRTAHVILTWIITLILFL. At 30–45 the chain is on the lumenal side; that stretch reads HNTDLRRCQERGDLLQ. The chain crosses the membrane as a helical span at residues 46 to 66; that stretch reads PLVFSSVLLLSVLLYFTVSLM. Residues 67–145 are Cytoplasmic-facing; it reads DPGFVLSDSQ…DNCVGELNHR (79 aa). Residues 102–152 form the DHHC domain; the sequence is RRCGYCFLLQPMRARHCKWCKRCVRRFDHHCPWIDNCVGELNHRWFLLYLC. Catalysis depends on Cys-132, which acts as the S-palmitoyl cysteine intermediate. A helical transmembrane segment spans residues 146-166; sequence WFLLYLCVQFTAVCWGLQSAW. The Lumenal portion of the chain corresponds to 167–182; it reads SGFISAPSWQQWFTQN. Residues 183–203 form a helical membrane-spanning segment; it reads VFLLVAFAVTAVFSVVLLLLL. The Cytoplasmic segment spans residues 204 to 270; that stretch reads CIHAYLASVN…MYIRHNNASV (67 aa).

Belongs to the DHHC palmitoyltransferase family.

The protein resides in the golgi apparatus membrane. It is found in the endoplasmic reticulum membrane. It carries out the reaction L-cysteinyl-[protein] + hexadecanoyl-CoA = S-hexadecanoyl-L-cysteinyl-[protein] + CoA. Its function is as follows. Palmitoyltransferase that catalyzes the addition of palmitate onto various protein substrates. Has a palmitoyltransferase activity toward gephyrin/GPHN, regulating its clustering at synapses and its function in gamma-aminobutyric acid receptor clustering. Acts as an inhibitor of the NLRP3 inflammasome by mediating palmitoylation of NLRP3, thereby promoting NLRP3 degradation by the chaperone-mediated autophagy (CMA) process. This Danio rerio (Zebrafish) protein is Palmitoyltransferase ZDHHC12-A.